The primary structure comprises 160 residues: Type IV major fimbrial protein FimA (160 aa).

The propeptide at 1 to 7 (MKSLQKG) is leader sequence. F8 carries the post-translational modification N-methylphenylalanine. A helical membrane pass occupies residues 8–28 (FTLIELMIVVAIIGILAAFAI). A disulfide bond links C63 and C105.

It belongs to the N-Me-Phe pilin family. As to quaternary structure, the pili are polar flexible filaments of about 5.4 nanometers diameter and 2.5 micrometers average length; they consist of only a single polypeptide chain arranged in a helical configuration of five subunits per turn in the assembled pilus.

The protein localises to the fimbrium. Its subcellular location is the membrane. Its function is as follows. Major component of the type IV fimbriae that plays an essential role in twitching motility, natural transformation, and protease secretion. The chain is Type IV major fimbrial protein FimA (fimA) from Dichelobacter nodosus (Bacteroides nodosus).